Here is a 514-residue protein sequence, read N- to C-terminus: Type-2 serine--tRNA ligase (514 aa).

Ala313 contributes to the L-serine binding site. A Zn(2+)-binding site is contributed by Cys315. Arg344 lines the L-serine pocket. ATP-binding positions include 344-346 (RWE) and 355-356 (RV). Residue 361–363 (RGE) participates in L-serine binding. Positions 363 and 470 each coordinate Zn(2+). Residue Arg477 coordinates ATP.

The protein belongs to the class-II aminoacyl-tRNA synthetase family. Type-2 seryl-tRNA synthetase subfamily. Homodimer. It depends on Zn(2+) as a cofactor.

The protein resides in the cytoplasm. The enzyme catalyses tRNA(Ser) + L-serine + ATP = L-seryl-tRNA(Ser) + AMP + diphosphate + H(+). It carries out the reaction tRNA(Sec) + L-serine + ATP = L-seryl-tRNA(Sec) + AMP + diphosphate + H(+). The protein operates within aminoacyl-tRNA biosynthesis; selenocysteinyl-tRNA(Sec) biosynthesis; L-seryl-tRNA(Sec) from L-serine and tRNA(Sec): step 1/1. Catalyzes the attachment of serine to tRNA(Ser). Is also able to aminoacylate tRNA(Sec) with serine, to form the misacylated tRNA L-seryl-tRNA(Sec), which will be further converted into selenocysteinyl-tRNA(Sec). The chain is Type-2 serine--tRNA ligase (serS) from Methanococcus maripaludis (strain DSM 14266 / JCM 13030 / NBRC 101832 / S2 / LL).